The chain runs to 417 residues: Hydrogen cyanide synthase subunit HcnC (417 aa).

A signal peptide spans 1–18; the sequence is MIKHYDVVIAGGGVIGAS. 7-21 lines the FAD pocket; sequence VVIAGGGVIGASCAY. Cys-19 carries N-palmitoyl cysteine lipidation. Cys-19 carries the S-diacylglycerol cysteine lipid modification. Residues 46-66 traverse the membrane as a helical segment; that stretch reads SAGGLWAIGESVGLGCGVIFF.

Belongs to the FAD-dependent glycerol-3-phosphate dehydrogenase family. Heterotrimer of HcnA, HcnB and HcnC.

It localises to the cell membrane. It catalyses the reaction glycine + 2 A = hydrogen cyanide + 2 AH2 + CO2. Functionally, a three-component membrane-bound flavoenzyme that catalyzes the formation of hydrogen cyanide, a secondary metabolite, by transfer of electrons to a cyanide-resistant branch of the aerobic respiratory chain. Contributes to suppression of black root rot of tobacco. The sequence is that of Hydrogen cyanide synthase subunit HcnC from Pseudomonas protegens (strain DSM 19095 / LMG 27888 / CFBP 6595 / CHA0).